The chain runs to 553 residues: RNA exonuclease 1 (553 aa).

Phosphoserine is present on S24. The stretch at 167–194 forms a coiled coil; it reads MEKINKLKELQKKKKITINDLVLSEQQL. The region spanning 225 to 373 is the Exonuclease domain; the sequence is IFALDCEMCL…EDARACLELT (149 aa). Residues 509–533 adopt a coiled-coil conformation; the sequence is WNNLSTELEFIQDKKERLDKRRERE.

It belongs to the REXO1/REXO3 family.

It localises to the nucleus. In terms of biological role, 3' exoribonuclease required for 5S rRNA maturation and for the proper maturation of the 5' cistron of the tRNA-Arg3 dicistronic gene. Involved with REX2 in the maturation of the 5.8S rRNA, and with REX2 and REX3, in the 3' processing of the U5L snRNA. The sequence is that of RNA exonuclease 1 (RNH70) from Saccharomyces cerevisiae (strain ATCC 204508 / S288c) (Baker's yeast).